Reading from the N-terminus, the 207-residue chain is 3-demethoxyubiquinol 3-hydroxylase (207 aa).

Over residues E22–P32 the composition is skewed to basic and acidic residues. The disordered stretch occupies residues E22–E41. Fe cation contacts are provided by E56, E86, H89, E138, E170, and H173.

Belongs to the COQ7 family. Fe cation serves as cofactor.

The protein localises to the cell membrane. The enzyme catalyses a 5-methoxy-2-methyl-3-(all-trans-polyprenyl)benzene-1,4-diol + AH2 + O2 = a 3-demethylubiquinol + A + H2O. It participates in cofactor biosynthesis; ubiquinone biosynthesis. In terms of biological role, catalyzes the hydroxylation of 2-nonaprenyl-3-methyl-6-methoxy-1,4-benzoquinol during ubiquinone biosynthesis. The chain is 3-demethoxyubiquinol 3-hydroxylase from Cupriavidus metallidurans (strain ATCC 43123 / DSM 2839 / NBRC 102507 / CH34) (Ralstonia metallidurans).